The primary structure comprises 254 residues: 5'-nucleotidase SurE (254 aa).

Aspartate 8, aspartate 9, serine 40, and asparagine 93 together coordinate a divalent metal cation.

Belongs to the SurE nucleotidase family. A divalent metal cation is required as a cofactor.

Its subcellular location is the cytoplasm. It carries out the reaction a ribonucleoside 5'-phosphate + H2O = a ribonucleoside + phosphate. Its function is as follows. Nucleotidase that shows phosphatase activity on nucleoside 5'-monophosphates. This is 5'-nucleotidase SurE from Methylorubrum extorquens (strain CM4 / NCIMB 13688) (Methylobacterium extorquens).